We begin with the raw amino-acid sequence, 207 residues long: Small ribosomal subunit protein uS4 (207 aa).

The tract at residues K31–N54 is disordered. The segment covering G42–G53 has biased composition (polar residues). The S4 RNA-binding domain occupies S97–E158.

Belongs to the universal ribosomal protein uS4 family. As to quaternary structure, part of the 30S ribosomal subunit. Contacts protein S5. The interaction surface between S4 and S5 is involved in control of translational fidelity.

One of the primary rRNA binding proteins, it binds directly to 16S rRNA where it nucleates assembly of the body of the 30S subunit. Its function is as follows. With S5 and S12 plays an important role in translational accuracy. This chain is Small ribosomal subunit protein uS4, found in Polynucleobacter asymbioticus (strain DSM 18221 / CIP 109841 / QLW-P1DMWA-1) (Polynucleobacter necessarius subsp. asymbioticus).